The sequence spans 485 residues: Aspartyl/glutamyl-tRNA(Asn/Gln) amidotransferase subunit B (485 aa).

It belongs to the GatB/GatE family. GatB subfamily. In terms of assembly, heterotrimer of A, B and C subunits.

The enzyme catalyses L-glutamyl-tRNA(Gln) + L-glutamine + ATP + H2O = L-glutaminyl-tRNA(Gln) + L-glutamate + ADP + phosphate + H(+). It carries out the reaction L-aspartyl-tRNA(Asn) + L-glutamine + ATP + H2O = L-asparaginyl-tRNA(Asn) + L-glutamate + ADP + phosphate + 2 H(+). Its function is as follows. Allows the formation of correctly charged Asn-tRNA(Asn) or Gln-tRNA(Gln) through the transamidation of misacylated Asp-tRNA(Asn) or Glu-tRNA(Gln) in organisms which lack either or both of asparaginyl-tRNA or glutaminyl-tRNA synthetases. The reaction takes place in the presence of glutamine and ATP through an activated phospho-Asp-tRNA(Asn) or phospho-Glu-tRNA(Gln). This is Aspartyl/glutamyl-tRNA(Asn/Gln) amidotransferase subunit B from Ruminiclostridium cellulolyticum (strain ATCC 35319 / DSM 5812 / JCM 6584 / H10) (Clostridium cellulolyticum).